The chain runs to 66 residues: uncharacterized protein (66 aa).

This is an uncharacterized protein from Homo sapiens (Human).